The primary structure comprises 294 residues: Bifunctional protein FolD (294 aa).

NADP(+) is bound by residues 176–178 (GAS), Ser201, and Ile242.

Belongs to the tetrahydrofolate dehydrogenase/cyclohydrolase family. Homodimer.

The catalysed reaction is (6R)-5,10-methylene-5,6,7,8-tetrahydrofolate + NADP(+) = (6R)-5,10-methenyltetrahydrofolate + NADPH. It catalyses the reaction (6R)-5,10-methenyltetrahydrofolate + H2O = (6R)-10-formyltetrahydrofolate + H(+). It participates in one-carbon metabolism; tetrahydrofolate interconversion. Functionally, catalyzes the oxidation of 5,10-methylenetetrahydrofolate to 5,10-methenyltetrahydrofolate and then the hydrolysis of 5,10-methenyltetrahydrofolate to 10-formyltetrahydrofolate. The protein is Bifunctional protein FolD of Bordetella petrii (strain ATCC BAA-461 / DSM 12804 / CCUG 43448).